The primary structure comprises 444 residues: tRNA modification GTPase MnmE (444 aa).

(6S)-5-formyl-5,6,7,8-tetrahydrofolate contacts are provided by R25, E83, and K122. Residues 218 to 370 form the TrmE-type G domain; that stretch reads GFKVAIVGKP…IVGRLRDYLD (153 aa). GTP is bound by residues 228–233, 247–253, and 272–275; these read NVGKSS, SDEAGTT, and DTAG. Mg(2+) contacts are provided by S232 and T253. A (6S)-5-formyl-5,6,7,8-tetrahydrofolate-binding site is contributed by K444.

It belongs to the TRAFAC class TrmE-Era-EngA-EngB-Septin-like GTPase superfamily. TrmE GTPase family. Homodimer. Heterotetramer of two MnmE and two MnmG subunits. K(+) is required as a cofactor.

The protein resides in the cytoplasm. Exhibits a very high intrinsic GTPase hydrolysis rate. Involved in the addition of a carboxymethylaminomethyl (cmnm) group at the wobble position (U34) of certain tRNAs, forming tRNA-cmnm(5)s(2)U34. In Campylobacter curvus (strain 525.92), this protein is tRNA modification GTPase MnmE.